The chain runs to 216 residues: Large ribosomal subunit protein uL3 (216 aa).

Disordered regions lie at residues 89-108 (QRAS…VGGF) and 139-158 (NTHG…QCQS). Residue Gln157 is modified to N5-methylglutamine.

This sequence belongs to the universal ribosomal protein uL3 family. In terms of assembly, part of the 50S ribosomal subunit. Forms a cluster with proteins L14 and L19. Methylated by PrmB.

One of the primary rRNA binding proteins, it binds directly near the 3'-end of the 23S rRNA, where it nucleates assembly of the 50S subunit. This chain is Large ribosomal subunit protein uL3, found in Halorhodospira halophila (strain DSM 244 / SL1) (Ectothiorhodospira halophila (strain DSM 244 / SL1)).